Consider the following 65-residue polypeptide: Hirudin-3A' (65 aa).

Positions 1–3 (VVY) are interaction with thrombin active site. 3 disulfides stabilise this stretch: C6-C14, C16-C28, and C22-C39. A disordered region spans residues 32–65 (SDGEKNECVTGEGTPKPQSHNDGDFEEIPEEYLQ). T45 carries an O-linked (GalNAc...) threonine glycan. Positions 55 to 65 (DFEEIPEEYLQ) are interaction with fibrinogen-binding exosite of thrombin. A compositionally biased stretch (acidic residues) spans 55-65 (DFEEIPEEYLQ). At Y63 the chain carries Sulfotyrosine.

It belongs to the protease inhibitor I14 (hirudin) family.

It is found in the secreted. Hirudin is a potent thrombin-specific protease inhibitor. It forms a stable non-covalent complex with alpha-thrombin, thereby abolishing its ability to cleave fibrinogen. This chain is Hirudin-3A', found in Hirudo medicinalis (Medicinal leech).